We begin with the raw amino-acid sequence, 230 residues long: Uracil-DNA glycosylase (230 aa).

Asp-70 (proton acceptor) is an active-site residue.

This sequence belongs to the uracil-DNA glycosylase (UDG) superfamily. UNG family.

It is found in the cytoplasm. The enzyme catalyses Hydrolyzes single-stranded DNA or mismatched double-stranded DNA and polynucleotides, releasing free uracil.. Its function is as follows. Excises uracil residues from the DNA which can arise as a result of misincorporation of dUMP residues by DNA polymerase or due to deamination of cytosine. The protein is Uracil-DNA glycosylase of Pseudomonas syringae pv. syringae (strain B728a).